Here is an 80-residue protein sequence, read N- to C-terminus: RNA-binding protein Hfq (80 aa).

In terms of domain architecture, Sm spans 10–70 (DLFLNTVRKQ…ISTIMPGQPM (61 aa)).

The protein belongs to the Hfq family. In terms of assembly, homohexamer.

RNA chaperone that binds small regulatory RNA (sRNAs) and mRNAs to facilitate mRNA translational regulation in response to envelope stress, environmental stress and changes in metabolite concentrations. Also binds with high specificity to tRNAs. The sequence is that of RNA-binding protein Hfq from Rhizobium rhizogenes (strain K84 / ATCC BAA-868) (Agrobacterium radiobacter).